The primary structure comprises 71 residues: Exodeoxyribonuclease 7 small subunit (71 aa).

This sequence belongs to the XseB family. As to quaternary structure, heterooligomer composed of large and small subunits.

It is found in the cytoplasm. The catalysed reaction is Exonucleolytic cleavage in either 5'- to 3'- or 3'- to 5'-direction to yield nucleoside 5'-phosphates.. Bidirectionally degrades single-stranded DNA into large acid-insoluble oligonucleotides, which are then degraded further into small acid-soluble oligonucleotides. The polypeptide is Exodeoxyribonuclease 7 small subunit (Streptococcus uberis (strain ATCC BAA-854 / 0140J)).